Here is a 359-residue protein sequence, read N- to C-terminus: uncharacterized protein (359 aa).

Positions 1 to 17 (MLGRSLTSVLIVPTGIG) are cleaved as a signal peptide. Cys18 carries N-palmitoyl cysteine lipidation. The S-diacylglycerol cysteine moiety is linked to residue Cys18.

Its subcellular location is the cell membrane. This is an uncharacterized protein from Synechococcus sp. (strain ATCC 27144 / PCC 6301 / SAUG 1402/1) (Anacystis nidulans).